The chain runs to 2890 residues: Bifunctional DNA-directed RNA polymerase subunit beta-beta' (2890 aa).

The interval 1 to 1377 (MSKKIPLKNR…DINIFGDDVD (1377 aa)) is DNA-directed RNA polymerase subunit beta. The tract at residues 1384–2890 (PIVIKEDDRP…LRTLEDGPKF (1507 aa)) is DNA-directed RNA polymerase subunit beta'. Residues Cys1449, Cys1451, Cys1465, and Cys1468 each coordinate Zn(2+). Mg(2+)-binding residues include Asp1849, Asp1851, and Asp1853. Positions 2179, 2253, 2260, and 2263 each coordinate Zn(2+).

In the N-terminal section; belongs to the RNA polymerase beta chain family. This sequence in the C-terminal section; belongs to the RNA polymerase beta' chain family. The RNAP catalytic core consists of 2 alpha, 1 beta/beta' and 1 omega subunit. When a sigma factor is associated with the core the holoenzyme is formed, which can initiate transcription. The cofactor is Mg(2+). Zn(2+) serves as cofactor.

The enzyme catalyses RNA(n) + a ribonucleoside 5'-triphosphate = RNA(n+1) + diphosphate. In terms of biological role, DNA-dependent RNA polymerase catalyzes the transcription of DNA into RNA using the four ribonucleoside triphosphates as substrates. This chain is Bifunctional DNA-directed RNA polymerase subunit beta-beta' (rpoBC), found in Helicobacter pylori (strain HPAG1).